We begin with the raw amino-acid sequence, 884 residues long: Nonsense-mediated mRNA decay factor EBS1 (884 aa).

Disordered stretches follow at residues 596 to 645 (NSMK…PTMG) and 755 to 774 (QGGLYSSQQPSSMSSLNSAY). Positions 633-645 (RSSSLDSFSPTMG) are enriched in polar residues. The segment covering 760–772 (SSQQPSSMSSLNS) has biased composition (low complexity).

This sequence belongs to the EST1 family. As to quaternary structure, interacts with NMD helicase UPF1. Interacts with CDC33.

The protein localises to the nucleus. Its subcellular location is the chromosome. The protein resides in the telomere. It localises to the cytoplasm. It is found in the P-body. Plays a role in nonsense-mediated mRNA decay (NMD). Recruits UPF1 to cytoplasmic mRNA decay bodies (P-bodies). Negative regulator of gene expression. Inhibits translation most likely through effects on eIF-4E (CDC33). Involved in telomere maintenance. This is Nonsense-mediated mRNA decay factor EBS1 from Saccharomyces cerevisiae (strain ATCC 204508 / S288c) (Baker's yeast).